The chain runs to 500 residues: MLRLMHPFSAQPNEGVGLYILWTVAVLFVIFKLLAPAKCDLPTVNGRRRFEIGQYQARRRFALDGRGIILNGLRKARAFRVVSQKGPKIILGPEFADEVKSHPACNADVFIAKEFHAHVSGFEVLRPQQVMKDAIRLKLTRSIGVLMKPMSAETALILETQWGNSDCWHELDLKSTIASLVSRVSAVMFVGEELGRDQKWLSIVTNYSSDMFVADLDLCKWPEALRPIATYFLSSCGKLRRHIREAALMLDPILSERYSAPHNKHNFLDWFEEVAGGRKYNPVLAQLSLAAAAIDTTSDLIIQTLTDICRFRDSGKLQQDLREEMVRVLRADGWEKSAMYNLKLLDSVLKETQRVKPVVVFGMGRYVTEQMTLHDGTVIPQGETINVVNTRVWDSAVYPNPLEWDPYRFVRRRDSGDHAAHLVSPTPDHMGFGLGKHSCPGRFFAATKIKILLCHILLKYDVKISDEASSTVVSSGNFLFPDATLSFCVRRRQDNLTIWG.

Residues 15-35 (GVGLYILWTVAVLFVIFKLLA) traverse the membrane as a helical segment. Cys439 contacts heme.

The protein belongs to the cytochrome P450 family. It depends on heme as a cofactor.

It localises to the membrane. The protein operates within secondary metabolite biosynthesis; terpenoid biosynthesis. Functionally, cytochrome P450 monooxygenase; part of the gene cluster that mediates the biosynthesis of calidodehydroaustin, a fungal meroterpenoid. The first step of the pathway is the synthesis of 3,5-dimethylorsellinic acid by the polyketide synthase ausA. 3,5-dimethylorsellinic acid is then prenylated by the polyprenyl transferase ausN. Further epoxidation by the FAD-dependent monooxygenase ausM and cyclization by the probable terpene cyclase ausL lead to the formation of protoaustinoid A. Protoaustinoid A is then oxidized to spiro-lactone preaustinoid A3 by the combined action of the FAD-binding monooxygenases ausB and ausC, and the dioxygenase ausE. Acid-catalyzed keto-rearrangement and ring contraction of the tetraketide portion of preaustinoid A3 by ausJ lead to the formation of preaustinoid A4. The aldo-keto reductase ausK, with the help of ausH, is involved in the next step by transforming preaustinoid A4 into isoaustinone which is in turn hydroxylated by the P450 monooxygenase ausI to form austinolide. The cytochrome P450 monooxygenase ausG modifies austinolide to austinol. Austinol is further acetylated to austin by the O-acetyltransferase ausP, which spontaneously changes to dehydroaustin. The cytochrome P450 monooxygenase ausR then converts dehydroaustin is into 7-dehydrodehydroaustin. The hydroxylation catalyzed by ausR permits the O-acetyltransferase ausQ to add an additional acetyl group to the molecule, leading to the formation of acetoxydehydroaustin. The short chain dehydrogenase ausT catalyzes the reduction of the double bond present between carbon atoms 1 and 2 to convert 7-dehydrodehydroaustin into 1,2-dihydro-7-hydroxydehydroaustin. AusQ catalyzes not only an acetylation reaction but also the addition of the PKS ausV diketide product to 1,2-dihydro-7-hydroxydehydroaustin, forming precalidodehydroaustin. Finally, the iron/alpha-ketoglutarate-dependent dioxygenase converts precalidodehydroaustin into calidodehydroaustin. This chain is Cytochrome P450 monooxygenase ausR, found in Aspergillus calidoustus.